Here is a 772-residue protein sequence, read N- to C-terminus: Protein transport protein SEC23 F (772 aa).

The Zn(2+) site is built by Cys-65, Cys-68, Cys-87, and Cys-90. Residues 65–90 (CKTCKALLNAFARVDFAAMNWVCPFC) are zinc finger-like.

The protein belongs to the SEC23/SEC24 family. SEC23 subfamily. As to quaternary structure, component of the coat protein complex II (COPII), composed of at least five proteins: the Sec23/24 complex, the Sec13/31 complex and Sar1. Interacts with SEC24A.

Its subcellular location is the cytoplasmic vesicle. The protein resides in the COPII-coated vesicle membrane. The protein localises to the endoplasmic reticulum membrane. It is found in the membrane. Component of the coat protein complex II (COPII) which promotes the formation of transport vesicles from the endoplasmic reticulum (ER). The coat has two main functions, the physical deformation of the endoplasmic reticulum membrane into vesicles and the selection of cargo molecules. This Arabidopsis thaliana (Mouse-ear cress) protein is Protein transport protein SEC23 F.